The sequence spans 219 residues: RING finger protein nenya (219 aa).

The segment at 6-48 adopts an RING-type zinc-finger fold; the sequence is CNKCFRRRNVEPTLIFHMTQCQHVLCASCLSESSTDKKCPLCK. The disordered stretch occupies residues 161–181; that stretch reads NQARGLRPRTPSVTTSDNTQS.

May interact with itself, with narya and vilya through its RING-type zinc finger.

In terms of biological role, required for the formation of DNA double-strand breaks together with narya and vilya during the meiotic recombination process. Plays a redundant role with narya in chromosome segregation during female meiosis. The chain is RING finger protein nenya from Drosophila melanogaster (Fruit fly).